The sequence spans 932 residues: Isoleucine--tRNA ligase (932 aa).

Positions 57–67 match the 'HIGH' region motif; that stretch reads PYANGDIHMGH. E556 is a binding site for L-isoleucyl-5'-AMP. The short motif at 597 to 601 is the 'KMSKS' region element; the sequence is KMSKS. K600 contributes to the ATP binding site. Zn(2+) contacts are provided by C891, C894, C911, and C914.

This sequence belongs to the class-I aminoacyl-tRNA synthetase family. IleS type 1 subfamily. In terms of assembly, monomer. The cofactor is Zn(2+).

Its subcellular location is the cytoplasm. It carries out the reaction tRNA(Ile) + L-isoleucine + ATP = L-isoleucyl-tRNA(Ile) + AMP + diphosphate. Catalyzes the attachment of isoleucine to tRNA(Ile). As IleRS can inadvertently accommodate and process structurally similar amino acids such as valine, to avoid such errors it has two additional distinct tRNA(Ile)-dependent editing activities. One activity is designated as 'pretransfer' editing and involves the hydrolysis of activated Val-AMP. The other activity is designated 'posttransfer' editing and involves deacylation of mischarged Val-tRNA(Ile). The polypeptide is Isoleucine--tRNA ligase (Lactiplantibacillus plantarum (strain ATCC BAA-793 / NCIMB 8826 / WCFS1) (Lactobacillus plantarum)).